Consider the following 420-residue polypeptide: MSLFNSANKVIGGVLKFNPSKYQVRYLNLHEYQSKSLMDKYGVNTQKWRVVTKASDAIKAASELNGELVVKAQVHAGGRGKGSFIETGFKGGVHLCKTGKEAERLCDEMLGKHLVTKQTTKEGTKVQSVMLAESVDPKRELYFAIVMDRKYGGPVMIASPQGGVDIESVAEETPDLIFKEPIDIVKGIRPEQTKNLAEKLGFTGEKAKIAQQQMENLYQLFIKSDATQVEINPFAETTDGQVICMDAKINFDDNASFRQKEIFEMRDTAEEDPREVEAGKFGLNYIGLDGNIGCMVNGAGLAMATMDIIKLKGGIPANFLDVGGSASEQAVTEAFKILTKDPRVKCLLVNIFGGIMKCDIIASGIVNASKQVGLKIPLVVRLEGTNVNIGKEILEKSGLNITSASDLDDAAIKAVNCLKK.

An ATP-grasp domain is found at 35-263 (KSLMDKYGVN…NASFRQKEIF (229 aa)). GTP is bound by residues Gln-46, 78 to 80 (GRG), and Val-135. Residues Asn-232 and Asp-246 each contribute to the Mg(2+) site. Residues Asn-297 and 354-356 (GIM) each bind substrate.

This sequence belongs to the succinate/malate CoA ligase beta subunit family. GTP-specific subunit beta subfamily. Heterodimer of an alpha and a beta subunit. The beta subunit determines specificity for GTP. The cofactor is Mg(2+).

The protein localises to the mitochondrion. It catalyses the reaction GTP + succinate + CoA = succinyl-CoA + GDP + phosphate. Its pathway is carbohydrate metabolism; tricarboxylic acid cycle; succinate from succinyl-CoA (ligase route): step 1/1. Functionally, GTP-specific succinyl-CoA synthetase functions in the citric acid cycle (TCA), coupling the hydrolysis of succinyl-CoA to the synthesis of GTP and thus represents the only step of substrate-level phosphorylation in the TCA. The beta subunit provides nucleotide specificity of the enzyme and binds the substrate succinate, while the binding sites for coenzyme A and phosphate are found in the alpha subunit. This Dictyostelium discoideum (Social amoeba) protein is Succinate--CoA ligase [GDP-forming] subunit beta, mitochondrial (scsB).